Reading from the N-terminus, the 51-residue chain is Large ribosomal subunit protein eL39 (51 aa).

It belongs to the eukaryotic ribosomal protein eL39 family.

In Picrophilus torridus (strain ATCC 700027 / DSM 9790 / JCM 10055 / NBRC 100828 / KAW 2/3), this protein is Large ribosomal subunit protein eL39.